Reading from the N-terminus, the 248-residue chain is Triosephosphate isomerase (248 aa).

9 to 11 is a binding site for substrate; the sequence is NWK. His94 (electrophile) is an active-site residue. Glu166 acts as the Proton acceptor in catalysis. Residues Gly172, Ser211, and 232–233 contribute to the substrate site; that span reads GG.

It belongs to the triosephosphate isomerase family. Homodimer.

The protein localises to the cytoplasm. It carries out the reaction D-glyceraldehyde 3-phosphate = dihydroxyacetone phosphate. It participates in carbohydrate biosynthesis; gluconeogenesis. Its pathway is carbohydrate degradation; glycolysis; D-glyceraldehyde 3-phosphate from glycerone phosphate: step 1/1. Its function is as follows. Involved in the gluconeogenesis. Catalyzes stereospecifically the conversion of dihydroxyacetone phosphate (DHAP) to D-glyceraldehyde-3-phosphate (G3P). This is Triosephosphate isomerase from Herminiimonas arsenicoxydans.